Here is a 535-residue protein sequence, read N- to C-terminus: Tetrathionate hydrolase (535 aa).

Positions 1–39 (MNLKILVGLFILGIIILSAMTFLNFTTIVAQDKGDQQPK) are cleaved as a signal peptide. N-linked (GlcNAc...) asparagine glycosylation is present at Asn50.

The protein belongs to the tetrathionate hydrolase family. As to quaternary structure, monomer and homodimer; in equilibrium.

The protein resides in the cell surface. The enzyme catalyses tetrathionate + H2O = sulfur + thiosulfate + sulfate + H(+). Functionally, catalyzes the hydrolysis of tetrathionate to generate elemental sulfur, thiosulfate and sulfate. The sequence is that of Tetrathionate hydrolase from Acidianus ambivalens (Desulfurolobus ambivalens).